The chain runs to 511 residues: 3-octaprenyl-4-hydroxybenzoate carboxy-lyase (511 aa).

N176 provides a ligand contact to Mn(2+). Residues 179-181, 193-195, and 198-199 contribute to the prenylated FMN site; these read IYR, RWL, and RG. E242 contacts Mn(2+). D311 serves as the catalytic Proton donor.

The protein belongs to the UbiD family. In terms of assembly, homohexamer. Requires prenylated FMN as cofactor. The cofactor is Mn(2+).

It localises to the cell membrane. It carries out the reaction a 4-hydroxy-3-(all-trans-polyprenyl)benzoate + H(+) = a 2-(all-trans-polyprenyl)phenol + CO2. It functions in the pathway cofactor biosynthesis; ubiquinone biosynthesis. In terms of biological role, catalyzes the decarboxylation of 3-octaprenyl-4-hydroxy benzoate to 2-octaprenylphenol, an intermediate step in ubiquinone biosynthesis. The protein is 3-octaprenyl-4-hydroxybenzoate carboxy-lyase of Laribacter hongkongensis (strain HLHK9).